Here is a 298-residue protein sequence, read N- to C-terminus: MTDAPVISPLDQARILSEALPHMQRYDEETIVIKYGGHAMGAEDTAKAFARDIVLLEQTAVNPVVVHGGGPQIAQMLKRLGIKSEFAAGLRITDAATIEIVEMVLAGSINKQLVGYINEAGGKAVGLCGKDGNMVSATKATRTMVDPDSRIEEVIDLGFVGEPEKVDLTLLNQLIGHELIPVLAPLATSASGQTFNVNADTFAGAVAGALRAKRLLLLTDVPGVLDQNKKLIPELSIKDARKLIADGTISGGMIPKVETCIYALEQGVEGVVILDGKVPHAVLLELFTNQGTGTLIHK.

Substrate contacts are provided by residues 69–70 (GG), Arg-91, and Asn-196.

This sequence belongs to the acetylglutamate kinase family. ArgB subfamily.

It is found in the cytoplasm. The catalysed reaction is N-acetyl-L-glutamate + ATP = N-acetyl-L-glutamyl 5-phosphate + ADP. Its pathway is amino-acid biosynthesis; L-arginine biosynthesis; N(2)-acetyl-L-ornithine from L-glutamate: step 2/4. Functionally, catalyzes the ATP-dependent phosphorylation of N-acetyl-L-glutamate. In Rhodopseudomonas palustris (strain TIE-1), this protein is Acetylglutamate kinase.